Here is a 264-residue protein sequence, read N- to C-terminus: 3-methyl-2-oxobutanoate hydroxymethyltransferase (264 aa).

Mg(2+)-binding residues include aspartate 45 and aspartate 84. Residues 45–46, aspartate 84, and lysine 112 each bind 3-methyl-2-oxobutanoate; that span reads DS. A Mg(2+)-binding site is contributed by glutamate 114. Glutamate 181 (proton acceptor) is an active-site residue.

Belongs to the PanB family. As to quaternary structure, homodecamer; pentamer of dimers. Mg(2+) is required as a cofactor.

The protein resides in the cytoplasm. The catalysed reaction is 3-methyl-2-oxobutanoate + (6R)-5,10-methylene-5,6,7,8-tetrahydrofolate + H2O = 2-dehydropantoate + (6S)-5,6,7,8-tetrahydrofolate. The protein operates within cofactor biosynthesis; (R)-pantothenate biosynthesis; (R)-pantoate from 3-methyl-2-oxobutanoate: step 1/2. Functionally, catalyzes the reversible reaction in which hydroxymethyl group from 5,10-methylenetetrahydrofolate is transferred onto alpha-ketoisovalerate to form ketopantoate. This chain is 3-methyl-2-oxobutanoate hydroxymethyltransferase, found in Alteromonas mediterranea (strain DSM 17117 / CIP 110805 / LMG 28347 / Deep ecotype).